A 634-amino-acid chain; its full sequence is Mitochondrial Rho GTPase 1 (634 aa).

Residues 1–604 are Cytoplasmic-facing; sequence MLCCMRICVC…PRSEEDVEGK (604 aa). The region spanning 2-171 is the Miro 1 domain; it reads LCCMRICVCG…FFLCQKAVTH (170 aa). GTP contacts are provided by residues 11-18, 60-64, and 116-119; these read GDEGTGKS, DTSAV, and NKSD. 2 consecutive EF-hand domains span residues 187–222 and 307–342; these read AAVA…CFEK and EGYR…TPGL. Positions 200, 202, 204, 206, 211, 320, 322, 324, and 331 each coordinate Ca(2+). Residues 399-419 form a disordered region; it reads NPSTTAALKVTRPRKRRKRPG. Basic residues predominate over residues 409 to 419; sequence TRPRKRRKRPG. Residues 423-589 form the Miro 2 domain; sequence RNVVLGHIVG…FVHIAEAAME (167 aa). GTP-binding positions include 432–439, 468–472, and 538–541; these read GAPGSGKS, ELPGG, and LKAD. Residues 605 to 625 form a helical; Anchor for type IV membrane protein membrane-spanning segment; it reads WMSWGIALGAVVCAGAAAVMI. At 626 to 634 the chain is on the mitochondrial intermembrane side; it reads WRRVSGSGV.

It belongs to the mitochondrial Rho GTPase family.

It is found in the mitochondrion outer membrane. Its function is as follows. Mitochondrial GTPase involved in mitochondrial trafficking. Probably involved in control of anterograde transport of mitochondria and their subcellular distribution. This Emericella nidulans (strain FGSC A4 / ATCC 38163 / CBS 112.46 / NRRL 194 / M139) (Aspergillus nidulans) protein is Mitochondrial Rho GTPase 1 (gem1).